We begin with the raw amino-acid sequence, 513 residues long: 2,3-bisphosphoglycerate-independent phosphoglycerate mutase (513 aa).

Mn(2+) contacts are provided by Asp13 and Ser63. Ser63 acts as the Phosphoserine intermediate in catalysis. Residues His124, Arg154–Asp155, Arg186, Arg192, Arg262–Arg265, and Lys335 contribute to the substrate site. 5 residues coordinate Mn(2+): Asp402, His406, Asp443, His444, and His462.

It belongs to the BPG-independent phosphoglycerate mutase family. In terms of assembly, monomer. Requires Mn(2+) as cofactor.

It carries out the reaction (2R)-2-phosphoglycerate = (2R)-3-phosphoglycerate. It participates in carbohydrate degradation; glycolysis; pyruvate from D-glyceraldehyde 3-phosphate: step 3/5. Its function is as follows. Catalyzes the interconversion of 2-phosphoglycerate and 3-phosphoglycerate. This chain is 2,3-bisphosphoglycerate-independent phosphoglycerate mutase, found in Shewanella frigidimarina (strain NCIMB 400).